Consider the following 397-residue polypeptide: Succinate--CoA ligase [ADP-forming] subunit beta (397 aa).

The ATP-grasp domain occupies 9 to 254 (KALLKSFGAP…ETEQDAKELE (246 aa)). Residues Lys46, 53–55 (GRG), Glu109, Ala112, and Glu117 each bind ATP. Residues Asn209 and Asp223 each contribute to the Mg(2+) site. Residues Asn274 and 331–333 (GIM) contribute to the substrate site.

Belongs to the succinate/malate CoA ligase beta subunit family. As to quaternary structure, heterotetramer of two alpha and two beta subunits. It depends on Mg(2+) as a cofactor.

It catalyses the reaction succinate + ATP + CoA = succinyl-CoA + ADP + phosphate. The catalysed reaction is GTP + succinate + CoA = succinyl-CoA + GDP + phosphate. The protein operates within carbohydrate metabolism; tricarboxylic acid cycle; succinate from succinyl-CoA (ligase route): step 1/1. Its function is as follows. Succinyl-CoA synthetase functions in the citric acid cycle (TCA), coupling the hydrolysis of succinyl-CoA to the synthesis of either ATP or GTP and thus represents the only step of substrate-level phosphorylation in the TCA. The beta subunit provides nucleotide specificity of the enzyme and binds the substrate succinate, while the binding sites for coenzyme A and phosphate are found in the alpha subunit. The protein is Succinate--CoA ligase [ADP-forming] subunit beta of Hyphomonas neptunium (strain ATCC 15444).